The sequence spans 393 residues: Chalcone synthase 1 (393 aa).

Cysteine 166 is an active-site residue.

The protein belongs to the thiolase-like superfamily. Chalcone/stilbene synthases family.

The enzyme catalyses (E)-4-coumaroyl-CoA + 3 malonyl-CoA + 3 H(+) = 2',4,4',6'-tetrahydroxychalcone + 3 CO2 + 4 CoA. It functions in the pathway secondary metabolite biosynthesis; flavonoid biosynthesis. In terms of biological role, the primary product of this enzyme is 4,2',4',6'-tetrahydroxychalcone (also termed naringenin-chalcone or chalcone) which can under specific conditions spontaneously isomerize into naringenin. The chain is Chalcone synthase 1 (CHS1) from Ruta graveolens (Common rue).